Reading from the N-terminus, the 433-residue chain is MAFEFRLPDIGEGIHEGEIVKWFIKAGDTIEEDDVLAEVQNDKSVVEIPSPVSGTVEEVLVDEGTVAVVGDVIVKIDAPDAEEMQFKGHGDDEDSKKEEKEQESPVQEEASSTQSQEKTEVDESKTVKAMPSVRKYARENGVNIKAVNGSGKNGRITKEDIDAYLNGGSSEEGSNTSVASESTSSDVVNASATQALPEGDFPETTEKIPAMRKAIAKAMVNSKHTAPHVTLMDEIDVQELWDHRKKFKEIAAEQGTKLTFLPYVVKALVSALKKYPALNTSFNEEAGEVVHKHYWNIGIAADTDKGLLVPVVKHADRKSIFEISDEINELAVKARDGKLTSEEMKGATCTISNIGSAGGQWFTPVINHPEVAILGIGRIAQKPIVKDGEIVAAPVLALSLSFDHRQIDGATGQNAMNHIKRLLNNPELLLMEG.

The 76-residue stretch at 2–77 (AFEFRLPDIG…VVGDVIVKID (76 aa)) folds into the Lipoyl-binding domain. Lys43 carries the N6-lipoyllysine modification. 2 disordered regions span residues 80-134 (DAEE…PSVR) and 164-204 (YLNG…FPET). 2 stretches are compositionally biased toward basic and acidic residues: residues 84–103 (MQFK…KEQE) and 117–126 (EKTEVDESKT). One can recognise a Peripheral subunit-binding (PSBD) domain in the interval 128 to 165 (KAMPSVRKYARENGVNIKAVNGSGKNGRITKEDIDAYL). Residues 166–188 (NGGSSEEGSNTSVASESTSSDVV) show a composition bias toward low complexity. Residue His404 is part of the active site.

Belongs to the 2-oxoacid dehydrogenase family. In terms of assembly, forms a 24-polypeptide structural core with octahedral symmetry. Requires (R)-lipoate as cofactor.

The enzyme catalyses N(6)-[(R)-dihydrolipoyl]-L-lysyl-[protein] + acetyl-CoA = N(6)-[(R)-S(8)-acetyldihydrolipoyl]-L-lysyl-[protein] + CoA. In terms of biological role, the pyruvate dehydrogenase complex catalyzes the overall conversion of pyruvate to acetyl-CoA and CO(2). It contains multiple copies of three enzymatic components: pyruvate dehydrogenase (E1), dihydrolipoamide acetyltransferase (E2) and lipoamide dehydrogenase (E3). The protein is Dihydrolipoyllysine-residue acetyltransferase component of pyruvate dehydrogenase complex (pdhC) of Staphylococcus epidermidis (strain ATCC 12228 / FDA PCI 1200).